The primary structure comprises 302 residues: Nucleotide-binding protein BceJ2315_08000 (302 aa).

8–15 is an ATP binding site; that stretch reads GISGSGKS. 57–60 lines the GTP pocket; sequence DARS.

This sequence belongs to the RapZ-like family.

Its function is as follows. Displays ATPase and GTPase activities. The sequence is that of Nucleotide-binding protein BceJ2315_08000 from Burkholderia cenocepacia (strain ATCC BAA-245 / DSM 16553 / LMG 16656 / NCTC 13227 / J2315 / CF5610) (Burkholderia cepacia (strain J2315)).